The sequence spans 290 residues: 4-hydroxy-3-methylbut-2-enyl diphosphate reductase (290 aa).

Cys13 serves as a coordination point for [4Fe-4S] cluster. His41 and His75 together coordinate (2E)-4-hydroxy-3-methylbut-2-enyl diphosphate. Residues His41 and His75 each coordinate dimethylallyl diphosphate. Isopentenyl diphosphate-binding residues include His41 and His75. Cys97 is a binding site for [4Fe-4S] cluster. Position 129 (His129) interacts with (2E)-4-hydroxy-3-methylbut-2-enyl diphosphate. Dimethylallyl diphosphate is bound at residue His129. Residue His129 participates in isopentenyl diphosphate binding. The Proton donor role is filled by Glu131. (2E)-4-hydroxy-3-methylbut-2-enyl diphosphate is bound at residue Thr167. Cys198 provides a ligand contact to [4Fe-4S] cluster. Ser226, Ser227, Asn228, and Ser270 together coordinate (2E)-4-hydroxy-3-methylbut-2-enyl diphosphate. Residues Ser226, Ser227, Asn228, and Ser270 each contribute to the dimethylallyl diphosphate site. The isopentenyl diphosphate site is built by Ser226, Ser227, Asn228, and Ser270.

Belongs to the IspH family. It depends on [4Fe-4S] cluster as a cofactor.

It catalyses the reaction isopentenyl diphosphate + 2 oxidized [2Fe-2S]-[ferredoxin] + H2O = (2E)-4-hydroxy-3-methylbut-2-enyl diphosphate + 2 reduced [2Fe-2S]-[ferredoxin] + 2 H(+). The catalysed reaction is dimethylallyl diphosphate + 2 oxidized [2Fe-2S]-[ferredoxin] + H2O = (2E)-4-hydroxy-3-methylbut-2-enyl diphosphate + 2 reduced [2Fe-2S]-[ferredoxin] + 2 H(+). The protein operates within isoprenoid biosynthesis; dimethylallyl diphosphate biosynthesis; dimethylallyl diphosphate from (2E)-4-hydroxy-3-methylbutenyl diphosphate: step 1/1. Its pathway is isoprenoid biosynthesis; isopentenyl diphosphate biosynthesis via DXP pathway; isopentenyl diphosphate from 1-deoxy-D-xylulose 5-phosphate: step 6/6. In terms of biological role, catalyzes the conversion of 1-hydroxy-2-methyl-2-(E)-butenyl 4-diphosphate (HMBPP) into a mixture of isopentenyl diphosphate (IPP) and dimethylallyl diphosphate (DMAPP). Acts in the terminal step of the DOXP/MEP pathway for isoprenoid precursor biosynthesis. The chain is 4-hydroxy-3-methylbut-2-enyl diphosphate reductase from Bacteroides fragilis (strain ATCC 25285 / DSM 2151 / CCUG 4856 / JCM 11019 / LMG 10263 / NCTC 9343 / Onslow / VPI 2553 / EN-2).